Here is a 958-residue protein sequence, read N- to C-terminus: DNA repair and recombination protein RDH54 (958 aa).

The interval 189-217 (EALSQNMGNPSPPTTSTTETVPSTKNDGG) is disordered. Low complexity predominate over residues 202-212 (TTSTTETVPST). Positions 333 to 521 (LENDSDISGC…FTIIDFINPG (189 aa)) constitute a Helicase ATP-binding domain. 380-387 (IPLTGLCK) lines the ATP pocket. The DEGH box signature appears at 506–509 (NDLN). A Glycyl lysine isopeptide (Lys-Gly) (interchain with G-Cter in ubiquitin) cross-link involves residue Lys-649. Positions 665-824 (KLKVLMTLLE…DSEMRNKESS (160 aa)) constitute a Helicase C-terminal domain.

This sequence belongs to the SNF2/RAD54 helicase family. As to quaternary structure, interacts with RAD51 and DMC1.

It is found in the nucleus. It catalyses the reaction ATP + H2O = ADP + phosphate + H(+). Functionally, involved in the recombinational repair of double-strand breaks (DSB) in DNA during mitosis and meiosis. Has DNA dependent ATPase activity. Promotes D-loop (displacement loop) formation with RAD51 recombinase. Modifies the topology of double-stranded DNA during the D-loop reaction to facilitate the invasion of the homologous duplex molecule by the initiating single-stranded DNA substrate. Required for adaptation from G2/M checkpoint arrest induced by a double strand break, by participating in monitoring the extent of single-stranded DNA produced by resection of DNA ends. This role is distinct from its roles in recombination. Promotes colocalization of RAD51 and DMC1 during meiotic recombination. Involved in crossover interference. This Saccharomyces cerevisiae (strain ATCC 204508 / S288c) (Baker's yeast) protein is DNA repair and recombination protein RDH54 (RDH54).